We begin with the raw amino-acid sequence, 366 residues long: Gelsolin-like protein 2 (366 aa).

3 Gelsolin-like repeats span residues 55–139 (NFKV…DLFL), 177–252 (KHIV…HEFY), and 286–327 (KSTV…AQEK). An actin binding region spans residues 100 to 116 (KSTQDEYCVAAYKTVEL). The interval 104–107 (DEYC) is actin-actin interfilament contact point.

This sequence belongs to the villin/gelsolin family. In terms of assembly, interacts with actin monomers and filaments. As to expression, expressed in circular and longitudinal muscle, pseudohearts, pharynx and gizzard. Not expressed in seminal vesicles.

The protein resides in the cytoplasm. Its subcellular location is the cytoskeleton. Calcium-regulated protein that binds to the plus (or barbed) ends of actin monomers or filaments, preventing monomer exchange (end-blocking or capping). Can promote the assembly of monomers into filaments (nucleation) as well as sever existing filaments. The chain is Gelsolin-like protein 2 from Lumbricus terrestris (Common earthworm).